Consider the following 202-residue polypeptide: Holliday junction branch migration complex subunit RuvA (202 aa).

Residues 1-65 (MIAYVEGRLA…EDALELYGFA (65 aa)) form a domain I region. The interval 66–144 (TWDERQTFIV…VEDLPAAAPL (79 aa)) is domain II. The segment at 145–155 (VTGGAPGGVFR) is flexible linker. Residues 155 to 202 (RDALAGLANLGYGEEEASHVLKEVLHGEPDLDVGGALRAALRALARGR) form a domain III region.

Belongs to the RuvA family. Homotetramer. Forms an RuvA(8)-RuvB(12)-Holliday junction (HJ) complex. HJ DNA is sandwiched between 2 RuvA tetramers; dsDNA enters through RuvA and exits via RuvB. An RuvB hexamer assembles on each DNA strand where it exits the tetramer. Each RuvB hexamer is contacted by two RuvA subunits (via domain III) on 2 adjacent RuvB subunits; this complex drives branch migration. In the full resolvosome a probable DNA-RuvA(4)-RuvB(12)-RuvC(2) complex forms which resolves the HJ.

It localises to the cytoplasm. The RuvA-RuvB-RuvC complex processes Holliday junction (HJ) DNA during genetic recombination and DNA repair, while the RuvA-RuvB complex plays an important role in the rescue of blocked DNA replication forks via replication fork reversal (RFR). RuvA specifically binds to HJ cruciform DNA, conferring on it an open structure. The RuvB hexamer acts as an ATP-dependent pump, pulling dsDNA into and through the RuvAB complex. HJ branch migration allows RuvC to scan DNA until it finds its consensus sequence, where it cleaves and resolves the cruciform DNA. This chain is Holliday junction branch migration complex subunit RuvA, found in Nitratidesulfovibrio vulgaris (strain DP4) (Desulfovibrio vulgaris).